A 150-amino-acid polypeptide reads, in one-letter code: UPF0178 protein PBPRA1738 (150 aa).

This sequence belongs to the UPF0178 family.

This chain is UPF0178 protein PBPRA1738, found in Photobacterium profundum (strain SS9).